A 342-amino-acid polypeptide reads, in one-letter code: L-threonine 3-dehydrogenase (342 aa).

Cys-38 is a Zn(2+) binding site. Residues Thr-40 and His-43 each act as charge relay system in the active site. Zn(2+) is bound by residues His-63 and Glu-64. NAD(+)-binding positions include Ile-175, Asp-195, Arg-200, 263–265, and 287–288; these read LGI and VY.

This sequence belongs to the zinc-containing alcohol dehydrogenase family. In terms of assembly, homotetramer. It depends on Zn(2+) as a cofactor.

The protein localises to the cytoplasm. It carries out the reaction L-threonine + NAD(+) = (2S)-2-amino-3-oxobutanoate + NADH + H(+). The protein operates within amino-acid degradation; L-threonine degradation via oxydo-reductase pathway; glycine from L-threonine: step 1/2. Functionally, catalyzes the NAD(+)-dependent oxidation of L-threonine to 2-amino-3-ketobutyrate. The sequence is that of L-threonine 3-dehydrogenase from Ruegeria pomeroyi (strain ATCC 700808 / DSM 15171 / DSS-3) (Silicibacter pomeroyi).